The sequence spans 476 residues: Lactate utilization protein B (476 aa).

4Fe-4S ferredoxin-type domains lie at 304–334 and 353–382; these read GTEF…GHSY and YDDY…LHEL. [4Fe-4S] cluster is bound by residues Cys-313, Cys-316, Cys-319, Cys-323, Cys-366, Cys-369, and Cys-373.

This sequence belongs to the LutB/YkgF family.

Functionally, is involved in L-lactate degradation and allows cells to grow with lactate as the sole carbon source. Has probably a role as an electron transporter during oxidation of L-lactate. This chain is Lactate utilization protein B, found in Geobacillus thermodenitrificans (strain NG80-2).